The chain runs to 372 residues: 12-oxophytodienoate reductase 1 (372 aa).

An N-acetylmethionine modification is found at M1. Residues 31–33 (PLT), A64, and Q106 contribute to the FMN site. H183 is a binding site for substrate. Y188 (proton donor) is an active-site residue. Residue R235 participates in FMN binding. R275 provides a ligand contact to substrate. Residues 303–305 (AGG) and 326–327 (GR) contribute to the FMN site.

This sequence belongs to the NADH:flavin oxidoreductase/NADH oxidase family. FMN serves as cofactor. In terms of tissue distribution, mostly expressed in roots, also present in leaves, shoots and flowers. More abundant in cotyledons. In more details, expressed in peduncles, sepals, petals, around the abscission zone of siliques, maturing siliques and developing seeds.

Its subcellular location is the cytoplasm. The enzyme catalyses (1S,2S)-OPC-8 + NADP(+) = (9S,13S,15Z)-12-oxophyto-10,15-dienoate + NADPH + H(+). The protein operates within lipid metabolism; oxylipin biosynthesis. Its function is as follows. Specifically cleaves olefinic bonds in alpha,beta-unsaturated carbonyls and may be involved in detoxification or modification of these reactive compounds. May be involved in the biosynthesis or metabolism of oxylipin signaling molecules. In vitro, reduces 9R,13R-12-oxophytodienoic acid (9R,13R-OPDA) to 9R,13R-OPC-8:0, but only poorly 9S,13S-OPDA, the natural precursor of jasmonic acid. Can detoxify the explosive 2,4,6-trinitrotoluene (TNT) in vitro and in vivo by catalyzing its nitroreduction to form hydroxylamino-dinitrotoluene (HADNT). This is 12-oxophytodienoate reductase 1 from Arabidopsis thaliana (Mouse-ear cress).